The primary structure comprises 253 residues: Phycoerythrobilin:ferredoxin oxidoreductase (253 aa).

This sequence belongs to the HY2 family.

It carries out the reaction (3Z)-phycoerythrobilin + oxidized 2[4Fe-4S]-[ferredoxin] = 15,16-dihydrobiliverdin + reduced 2[4Fe-4S]-[ferredoxin] + 2 H(+). Functionally, catalyzes the two-electron reduction of the C2 and C3(1) diene system of 15,16-dihydrobiliverdin. This Prochlorococcus marinus (strain MIT 9312) protein is Phycoerythrobilin:ferredoxin oxidoreductase.